The chain runs to 281 residues: Undecaprenyl-diphosphatase 1 (281 aa).

The next 6 membrane-spanning stretches (helical) occupy residues W95–I115, F119–A139, L152–V172, F195–A215, L227–L247, and F256–T276.

The protein belongs to the UppP family.

The protein resides in the cell membrane. The catalysed reaction is di-trans,octa-cis-undecaprenyl diphosphate + H2O = di-trans,octa-cis-undecaprenyl phosphate + phosphate + H(+). Its function is as follows. Catalyzes the dephosphorylation of undecaprenyl diphosphate (UPP). Confers resistance to bacitracin. The protein is Undecaprenyl-diphosphatase 1 of Corynebacterium jeikeium (strain K411).